We begin with the raw amino-acid sequence, 116 residues long: MQNIIKSIEEEYYKKDLPRFGPGDTVKVHVKVVEGTRERLQVFEGTVIKIRGTGLSQTFTVRRTTSGVGVERTFPLHSPKIARIEVTRRGKVRRGRLYYLRQLTGKKARVKEKGRY.

The protein belongs to the bacterial ribosomal protein bL19 family.

This protein is located at the 30S-50S ribosomal subunit interface and may play a role in the structure and function of the aminoacyl-tRNA binding site. The sequence is that of Large ribosomal subunit protein bL19 from Syntrophomonas wolfei subsp. wolfei (strain DSM 2245B / Goettingen).